Reading from the N-terminus, the 434-residue chain is MNIIVVGLSHKTATVEIREKVAFAPTQMEKPLHALVSLPDITEAVIVSTCNRVEIYATTRDIAGGVARLKRFLADYHNISLETLEPHLYSYHGEAATRHVFRVASSLDSMVVGEPQILGQIKTSYGYAAEYKSSGIILNRFLHKAFSVAKRVRTETKIASSAVSVAFAAVELAKKIFGDLSDKTVMLIGAGEMCELAAKHFINTGVRGVMVTNRTFERAVKLAEEFDGKAVNYEELFDHLHKADIVLSSTGAPHFIIGPKNVEEVIRRRKMKPMFFIDIAVPRDIDPKVNDVENIYLYTVDDLNGVVATNLEQRNKEAEKAEAIVEQEIGQFFKWLSSLEVTPTIVALRSKFDEIRRAELAKTLANWKELPPDAEKRLEALTSAIMNKLLHQPTSVLKRAEQGNRNDLYIDALRNLFELETTRPEVEELGELEE.

Substrate is bound by residues 49–52, serine 109, 114–116, and glutamine 120; these read TCNR and EPQ. Cysteine 50 serves as the catalytic Nucleophile. 189 to 194 lines the NADP(+) pocket; it reads GAGEMC.

This sequence belongs to the glutamyl-tRNA reductase family. In terms of assembly, homodimer.

The enzyme catalyses (S)-4-amino-5-oxopentanoate + tRNA(Glu) + NADP(+) = L-glutamyl-tRNA(Glu) + NADPH + H(+). It participates in porphyrin-containing compound metabolism; protoporphyrin-IX biosynthesis; 5-aminolevulinate from L-glutamyl-tRNA(Glu): step 1/2. Functionally, catalyzes the NADPH-dependent reduction of glutamyl-tRNA(Glu) to glutamate 1-semialdehyde (GSA). This chain is Glutamyl-tRNA reductase, found in Geotalea uraniireducens (strain Rf4) (Geobacter uraniireducens).